The following is an 81-amino-acid chain: Trefoil factor 1 (81 aa).

The signal sequence occupies residues 1–21 (MEHKVTCVLAMVLMLALSSLA). The residue at position 22 (Gln-22) is a Pyrrolidone carboxylic acid. One can recognise a P-type domain in the interval 26 to 69 (ETCAVIPRERINCGFPGVTAQQCKEKGCCFDDSVRGFPWCFRPL). Intrachain disulfides connect Cys-28–Cys-54, Cys-38–Cys-53, and Cys-48–Cys-65.

It is found in the secreted. Stabilizer of the mucous gel overlying the gastrointestinal mucosa that provides a physical barrier against various noxious agents. In Rattus norvegicus (Rat), this protein is Trefoil factor 1 (Tff1).